The sequence spans 500 residues: Glycerol kinase (500 aa).

Residue Thr12 coordinates ADP. The ATP site is built by Thr12, Thr13, and Ser14. Residue Thr12 coordinates sn-glycerol 3-phosphate. Residue Arg16 coordinates ADP. Positions 82, 83, 135, and 245 each coordinate sn-glycerol 3-phosphate. Residues Arg82, Glu83, Tyr135, Asp245, and Gln246 each contribute to the glycerol site. ADP-binding residues include Thr267 and Gly310. ATP-binding residues include Thr267, Gly310, Gln314, and Gly411. ADP is bound by residues Gly411 and Asn415.

The protein belongs to the FGGY kinase family. In terms of assembly, homotetramer and homodimer (in equilibrium).

The enzyme catalyses glycerol + ATP = sn-glycerol 3-phosphate + ADP + H(+). It functions in the pathway polyol metabolism; glycerol degradation via glycerol kinase pathway; sn-glycerol 3-phosphate from glycerol: step 1/1. Activated by phosphorylation and inhibited by fructose 1,6-bisphosphate (FBP). Functionally, key enzyme in the regulation of glycerol uptake and metabolism. Catalyzes the phosphorylation of glycerol to yield sn-glycerol 3-phosphate. This Clostridium perfringens (strain SM101 / Type A) protein is Glycerol kinase.